The primary structure comprises 372 residues: Testis-specific serine/threonine-protein kinase 5 (372 aa).

Residues 27 to 302 (LLSSKKIGSG…LQQVAAHCWM (276 aa)) enclose the Protein kinase domain. ATP-binding positions include 33–41 (IGSGAFSKV) and Lys72. Residue Asp173 is the Proton acceptor of the active site. The tract at residues 314 to 372 (GAPREQDHSWSTVAPDNTEPDRDTRHARSKGSSSSSGRTSPRRPSLAQLCNTWKPAPEQ) is disordered. The span at 343–358 (KGSSSSSGRTSPRRPS) shows a compositional bias: low complexity.

Belongs to the protein kinase superfamily. CAMK Ser/Thr protein kinase family. Mg(2+) serves as cofactor. In terms of processing, autophosphorylated.

It carries out the reaction L-seryl-[protein] + ATP = O-phospho-L-seryl-[protein] + ADP + H(+). The catalysed reaction is L-threonyl-[protein] + ATP = O-phospho-L-threonyl-[protein] + ADP + H(+). With respect to regulation, activated by phosphorylation on Thr-207, potentially by autophosphorylation. Functionally, may be involved in a signaling pathway during male germ cell development or mature sperm function. The sequence is that of Testis-specific serine/threonine-protein kinase 5 from Mus musculus (Mouse).